The sequence spans 596 residues: Arginine--tRNA ligase (596 aa).

The short motif at 135–145 (ANPTGPIHIGG) is the 'HIGH' region element. The segment at 227–249 (PRVDGGADQDGNPLGEGDSEQRE) is disordered.

The protein belongs to the class-I aminoacyl-tRNA synthetase family. In terms of assembly, monomer.

It is found in the cytoplasm. It catalyses the reaction tRNA(Arg) + L-arginine + ATP = L-arginyl-tRNA(Arg) + AMP + diphosphate. The sequence is that of Arginine--tRNA ligase from Bifidobacterium adolescentis (strain ATCC 15703 / DSM 20083 / NCTC 11814 / E194a).